The sequence spans 512 residues: Probable DNA ligase (512 aa).

Glu-208 provides a ligand contact to ATP. Lys-210 functions as the N6-AMP-lysine intermediate in the catalytic mechanism. ATP contacts are provided by Arg-215, Arg-230, Glu-259, Phe-299, Arg-374, and Lys-380.

The protein belongs to the ATP-dependent DNA ligase family. Mg(2+) serves as cofactor.

It carries out the reaction ATP + (deoxyribonucleotide)n-3'-hydroxyl + 5'-phospho-(deoxyribonucleotide)m = (deoxyribonucleotide)n+m + AMP + diphosphate.. Its function is as follows. DNA ligase that seals nicks in double-stranded DNA during DNA replication, DNA recombination and DNA repair. The polypeptide is Probable DNA ligase (Streptomyces avermitilis (strain ATCC 31267 / DSM 46492 / JCM 5070 / NBRC 14893 / NCIMB 12804 / NRRL 8165 / MA-4680)).